A 102-amino-acid polypeptide reads, in one-letter code: Small ribosomal subunit protein uS10 (102 aa).

The protein belongs to the universal ribosomal protein uS10 family. In terms of assembly, part of the 30S ribosomal subunit.

Functionally, involved in the binding of tRNA to the ribosomes. This Thermococcus gammatolerans (strain DSM 15229 / JCM 11827 / EJ3) protein is Small ribosomal subunit protein uS10.